Reading from the N-terminus, the 355-residue chain is Peptide chain release factor 1 (355 aa).

Gln231 bears the N5-methylglutamine mark.

The protein belongs to the prokaryotic/mitochondrial release factor family. In terms of processing, methylated by PrmC. Methylation increases the termination efficiency of RF1.

The protein resides in the cytoplasm. Functionally, peptide chain release factor 1 directs the termination of translation in response to the peptide chain termination codons UAG and UAA. The protein is Peptide chain release factor 1 of Erythrobacter litoralis (strain HTCC2594).